Here is a 200-residue protein sequence, read N- to C-terminus: uncharacterized protein (200 aa).

Residues 7–29 (FFFLFSFISHAMMLTGLIGSSSF) traverse the membrane as a helical segment.

It is found in the membrane. This is an uncharacterized protein from Saccharomyces cerevisiae (strain ATCC 204508 / S288c) (Baker's yeast).